The chain runs to 101 residues: Small ribosomal subunit protein uS14 (101 aa).

The protein belongs to the universal ribosomal protein uS14 family. Part of the 30S ribosomal subunit. Contacts proteins S3 and S10.

Binds 16S rRNA, required for the assembly of 30S particles and may also be responsible for determining the conformation of the 16S rRNA at the A site. The polypeptide is Small ribosomal subunit protein uS14 (Neisseria gonorrhoeae (strain ATCC 700825 / FA 1090)).